The chain runs to 149 residues: Ribonuclease H (149 aa).

Residues 1-142 enclose the RNase H type-1 domain; the sequence is MSTITIHTDG…ADELAREGLA (142 aa). D9, E47, D70, and D134 together coordinate Mg(2+). The segment at 124–149 is disordered; that stretch reads HAGDPGNERADELAREGLAEARGRQP. Over residues 129-149 the composition is skewed to basic and acidic residues; it reads GNERADELAREGLAEARGRQP.

It belongs to the RNase H family. As to quaternary structure, monomer. Requires Mg(2+) as cofactor.

Its subcellular location is the cytoplasm. The enzyme catalyses Endonucleolytic cleavage to 5'-phosphomonoester.. In terms of biological role, endonuclease that specifically degrades the RNA of RNA-DNA hybrids. The polypeptide is Ribonuclease H (Maricaulis maris (strain MCS10) (Caulobacter maris)).